Here is a 172-residue protein sequence, read N- to C-terminus: Adenine phosphoribosyltransferase (172 aa).

The protein belongs to the purine/pyrimidine phosphoribosyltransferase family. As to quaternary structure, homodimer.

It is found in the cytoplasm. It catalyses the reaction AMP + diphosphate = 5-phospho-alpha-D-ribose 1-diphosphate + adenine. It functions in the pathway purine metabolism; AMP biosynthesis via salvage pathway; AMP from adenine: step 1/1. Functionally, catalyzes a salvage reaction resulting in the formation of AMP, that is energically less costly than de novo synthesis. This chain is Adenine phosphoribosyltransferase, found in Streptococcus agalactiae serotype Ia (strain ATCC 27591 / A909 / CDC SS700).